The following is a 202-amino-acid chain: Tumor necrosis factor alpha-induced protein 8-like protein 3 (202 aa).

Acidic residues predominate over residues 1–10 (MDTDSGDLSE). Residues 1–24 (MDTDSGDLSEGELSPGPEQFSSKS) are disordered.

This sequence belongs to the TNFAIP8 family.

It is found in the cytoplasm. Its subcellular location is the cell membrane. May act as a lipid transfer protein. The sequence is that of Tumor necrosis factor alpha-induced protein 8-like protein 3 (tnfaip8l3) from Xenopus laevis (African clawed frog).